Reading from the N-terminus, the 190-residue chain is Ribosome maturation factor RimM (190 aa).

Residues Glu102–Asp190 form the PRC barrel domain.

The protein belongs to the RimM family. In terms of assembly, binds ribosomal protein uS19.

The protein resides in the cytoplasm. Functionally, an accessory protein needed during the final step in the assembly of 30S ribosomal subunit, possibly for assembly of the head region. Essential for efficient processing of 16S rRNA. May be needed both before and after RbfA during the maturation of 16S rRNA. It has affinity for free ribosomal 30S subunits but not for 70S ribosomes. The polypeptide is Ribosome maturation factor RimM (Bordetella avium (strain 197N)).